Reading from the N-terminus, the 514-residue chain is CUGBP Elav-like family member 2 (514 aa).

3 consecutive RRM domains span residues 44 to 127, 136 to 216, and 429 to 507; these read IKMF…PADS, RKLF…FADT, and ANLF…LKRS.

It belongs to the CELF/BRUNOL family.

It localises to the nucleus. It is found in the cytoplasm. RNA-binding protein implicated in the regulation of several post-transcriptional events. May be involved in pre-mRNA alternative splicing, mRNA translation repression and stability. This is CUGBP Elav-like family member 2 (celf2) from Danio rerio (Zebrafish).